The following is a 255-amino-acid chain: tRNA (guanine-N(1)-)-methyltransferase (255 aa).

S-adenosyl-L-methionine contacts are provided by residues glycine 113 and 133–138 (IGDYVL).

The protein belongs to the RNA methyltransferase TrmD family. In terms of assembly, homodimer.

Its subcellular location is the cytoplasm. It carries out the reaction guanosine(37) in tRNA + S-adenosyl-L-methionine = N(1)-methylguanosine(37) in tRNA + S-adenosyl-L-homocysteine + H(+). Specifically methylates guanosine-37 in various tRNAs. This is tRNA (guanine-N(1)-)-methyltransferase from Mannheimia succiniciproducens (strain KCTC 0769BP / MBEL55E).